Here is a 57-residue protein sequence, read N- to C-terminus: UPF0391 membrane protein Atu4467 (57 aa).

A run of 2 helical transmembrane segments spans residues 4–24 and 33–53; these read WALI…TGIS and ILFF…LMAG.

Belongs to the UPF0391 family.

Its subcellular location is the cell membrane. This Agrobacterium fabrum (strain C58 / ATCC 33970) (Agrobacterium tumefaciens (strain C58)) protein is UPF0391 membrane protein Atu4467.